The chain runs to 112 residues: Large ribosomal subunit protein mL53 (112 aa).

The protein belongs to the mitochondrion-specific ribosomal protein mL53 family. As to quaternary structure, component of the mitochondrial ribosome large subunit (39S) which comprises a 16S rRNA and about 50 distinct proteins.

The protein resides in the mitochondrion. The polypeptide is Large ribosomal subunit protein mL53 (MRPL53) (Bos taurus (Bovine)).